The primary structure comprises 554 residues: ATP synthase subunit alpha (554 aa).

172 to 179 (GDRKTGKT) is a binding site for ATP. Residues 528 to 554 (LDEEELEKESVKVKKPAPEKKAKKEQK) form a disordered region. Residues 535-554 (KESVKVKKPAPEKKAKKEQK) show a composition bias toward basic and acidic residues.

This sequence belongs to the ATPase alpha/beta chains family. F-type ATPases have 2 components, CF(1) - the catalytic core - and CF(0) - the membrane proton channel. CF(1) has five subunits: alpha(3), beta(3), gamma(1), delta(1), epsilon(1). CF(0) has three main subunits: a(1), b(2) and c(9-12). The alpha and beta chains form an alternating ring which encloses part of the gamma chain. CF(1) is attached to CF(0) by a central stalk formed by the gamma and epsilon chains, while a peripheral stalk is formed by the delta and b chains.

The protein resides in the cell membrane. The catalysed reaction is ATP + H2O + 4 H(+)(in) = ADP + phosphate + 5 H(+)(out). Its function is as follows. Produces ATP from ADP in the presence of a proton gradient across the membrane. The alpha chain is a regulatory subunit. The protein is ATP synthase subunit alpha of Mycolicibacterium paratuberculosis (strain ATCC BAA-968 / K-10) (Mycobacterium paratuberculosis).